We begin with the raw amino-acid sequence, 200 residues long: Imidazoleglycerol-phosphate dehydratase (200 aa).

It belongs to the imidazoleglycerol-phosphate dehydratase family.

The protein localises to the cytoplasm. It carries out the reaction D-erythro-1-(imidazol-4-yl)glycerol 3-phosphate = 3-(imidazol-4-yl)-2-oxopropyl phosphate + H2O. The protein operates within amino-acid biosynthesis; L-histidine biosynthesis; L-histidine from 5-phospho-alpha-D-ribose 1-diphosphate: step 6/9. This Chlorobium phaeobacteroides (strain DSM 266 / SMG 266 / 2430) protein is Imidazoleglycerol-phosphate dehydratase.